A 901-amino-acid polypeptide reads, in one-letter code: Protein translocase subunit SecA (901 aa).

ATP contacts are provided by residues Gln87, 105–109 (GEGKT), and Asp512. The interval 859–901 (HQDDDSAAAAALAAQTGERKVGRNDPCPCGSGKKYKQCHGRLQ) is disordered. 4 residues coordinate Zn(2+): Cys885, Cys887, Cys896, and His897. Basic residues predominate over residues 891-901 (KKYKQCHGRLQ).

Belongs to the SecA family. Monomer and homodimer. Part of the essential Sec protein translocation apparatus which comprises SecA, SecYEG and auxiliary proteins SecDF-YajC and YidC. It depends on Zn(2+) as a cofactor.

It localises to the cell inner membrane. The protein resides in the cytoplasm. It catalyses the reaction ATP + H2O + cellular proteinSide 1 = ADP + phosphate + cellular proteinSide 2.. Part of the Sec protein translocase complex. Interacts with the SecYEG preprotein conducting channel. Has a central role in coupling the hydrolysis of ATP to the transfer of proteins into and across the cell membrane, serving both as a receptor for the preprotein-SecB complex and as an ATP-driven molecular motor driving the stepwise translocation of polypeptide chains across the membrane. In Escherichia coli O9:H4 (strain HS), this protein is Protein translocase subunit SecA.